The primary structure comprises 903 residues: Chitin synthase 1 (903 aa).

Residues 1–154 (MDPRYGAQPQ…YQDQPQQGGG (154 aa)) are disordered. The segment covering 67–79 (DHLNLNAAQSVDN) has biased composition (polar residues). An N-linked (GlcNAc...) asparagine glycan is attached at N79. Positions 100-117 (YYNQPYEPRPQQQPYDQG) are enriched in low complexity. The span at 135 to 150 (HQPSDAPSEPYQDQPQ) shows a compositional bias: polar residues. The next 9 helical transmembrane spans lie at 444 to 464 (SAFG…YVAL), 543 to 563 (RWLN…LDFL), 573 to 593 (FAFF…WFAI), 619 to 639 (ILGV…FVLS), 654 to 674 (MCWF…FIAV), 700 to 720 (MLII…LIML), 729 to 749 (LVQY…YAFC), 828 to 848 (GVVL…LSSA), and 875 to 895 (IVLW…MWFL).

Belongs to the chitin synthase family. Class I subfamily.

The protein localises to the cell membrane. The catalysed reaction is [(1-&gt;4)-N-acetyl-beta-D-glucosaminyl](n) + UDP-N-acetyl-alpha-D-glucosamine = [(1-&gt;4)-N-acetyl-beta-D-glucosaminyl](n+1) + UDP + H(+). Functionally, polymerizes chitin, a structural polymer of the cell wall and septum, by transferring the sugar moiety of UDP-GlcNAc to the non-reducing end of the growing chitin polymer. Plays an important role in nuclear sorting or distribution. In Fusarium oxysporum f. sp. lycopersici (strain 4287 / CBS 123668 / FGSC 9935 / NRRL 34936) (Fusarium vascular wilt of tomato), this protein is Chitin synthase 1.